The primary structure comprises 480 residues: Molybdate-anion transporter (480 aa).

12 helical membrane passes run 1–21, 44–63, 78–98, 129–149, 177–197, 199–219, 274–294, 304–324, 339–359, 369–389, 401–421, and 441–461; these read MFVT…GLEL, ATFL…QGPY, IAIL…FSGW, FVLI…TTTF, TWNH…AEWL, LGPV…AWFV, VMLL…FIFL, SPLG…SLLF, VLCV…FSTV, FLAF…LNFL, SVLA…LLAL, and FGGC…LFTL.

It belongs to the major facilitator superfamily.

It is found in the cell membrane. Mediates high-affinity intracellular uptake of the rare oligo-element molybdenum. The sequence is that of Molybdate-anion transporter (mfsd5) from Takifugu rubripes (Japanese pufferfish).